A 192-amino-acid chain; its full sequence is Lipid A acyltransferase PagP (192 aa).

Positions 1–29 are cleaved as a signal peptide; that stretch reads MVVNVVIVAKKYFLFITLLIIQVSLPAHA. Catalysis depends on residues His64, Asp107, and Ser108.

It belongs to the lipid A palmitoyltransferase family. In terms of assembly, homodimer.

The protein resides in the cell outer membrane. It catalyses the reaction a lipid A + a 1,2-diacyl-sn-glycero-3-phosphocholine = a hepta-acyl lipid A + a 2-acyl-sn-glycero-3-phosphocholine. It carries out the reaction a lipid IVA + a 1,2-diacyl-sn-glycero-3-phosphocholine = a lipid IVB + a 2-acyl-sn-glycero-3-phosphocholine. The enzyme catalyses a lipid IIA + a 1,2-diacyl-sn-glycero-3-phosphocholine = a lipid IIB + a 2-acyl-sn-glycero-3-phosphocholine. In terms of biological role, transfers a fatty acid residue from the sn-1 position of a phospholipid to the N-linked hydroxyfatty acid chain on the proximal unit of lipid A or its precursors. The protein is Lipid A acyltransferase PagP of Citrobacter rodentium (strain ICC168) (Citrobacter freundii biotype 4280).